Reading from the N-terminus, the 313-residue chain is 4-diphosphocytidyl-2-C-methyl-D-erythritol kinase (313 aa).

The active site involves K10. Residue 95–105 (PVTAGLGGGSS) participates in ATP binding. The active site involves D136. Residues 289–313 (HPRVSPWRSPRSASSRSTRRSSRPT) are disordered. Over residues 292–304 (VSPWRSPRSASSR) the composition is skewed to low complexity.

It belongs to the GHMP kinase family. IspE subfamily.

It catalyses the reaction 4-CDP-2-C-methyl-D-erythritol + ATP = 4-CDP-2-C-methyl-D-erythritol 2-phosphate + ADP + H(+). It participates in isoprenoid biosynthesis; isopentenyl diphosphate biosynthesis via DXP pathway; isopentenyl diphosphate from 1-deoxy-D-xylulose 5-phosphate: step 3/6. Functionally, catalyzes the phosphorylation of the position 2 hydroxy group of 4-diphosphocytidyl-2C-methyl-D-erythritol. The polypeptide is 4-diphosphocytidyl-2-C-methyl-D-erythritol kinase (Anaeromyxobacter sp. (strain K)).